Reading from the N-terminus, the 167-residue chain is Glutathione peroxidase 1 (167 aa).

Residue C41 is part of the active site.

Belongs to the glutathione peroxidase family.

It catalyses the reaction 2 glutathione + H2O2 = glutathione disulfide + 2 H2O. In terms of biological role, may constitute a glutathione peroxidase-like protective system against oxidative stresses. The polypeptide is Glutathione peroxidase 1 (GPXHA-1) (Helianthus annuus (Common sunflower)).